The sequence spans 1047 residues: UPF0182 protein Mlut_14990 (1047 aa).

Gly residues-rich tracts occupy residues 1–27 and 49–59; these read MSFG…GQSG and GPGGPFGGGGS. Residues 1–66 form a disordered region; sequence MSFGQGGGGP…GGSSAARGRG (66 aa). A run of 7 helical transmembrane segments spans residues 71–91, 114–134, 168–188, 214–234, 266–286, 314–334, and 341–361; these read PSAL…FVVF, VLAK…AVWL, LVFL…AMNG, FFMA…SVVL, AHIG…FWLN, AILA…VVSG, and IGTA…PFIV. Disordered regions lie at residues 544–568, 941–965, and 1007–1047; these read GAPA…TFSG, GDSG…PTAP, and EALK…TPSG. The segment covering 555-565 has biased composition (polar residues); it reads TADSQEDTAYT. The span at 1015-1037 shows a compositional bias: low complexity; it reads ADDALGGDAPAQEQAPAEASPAP. Positions 1038 to 1047 are enriched in pro residues; the sequence is SSSPSPTPSG.

The protein belongs to the UPF0182 family.

The protein localises to the cell membrane. In Micrococcus luteus (strain ATCC 4698 / DSM 20030 / JCM 1464 / CCM 169 / CCUG 5858 / IAM 1056 / NBRC 3333 / NCIMB 9278 / NCTC 2665 / VKM Ac-2230) (Micrococcus lysodeikticus), this protein is UPF0182 protein Mlut_14990.